We begin with the raw amino-acid sequence, 46 residues long: Apamin (46 aa).

A signal peptide spans 1–27; sequence MISMLRCIYLFLSVILITSYFVTPVMP. Disulfide bonds link C28–C38 and C30–C42. The segment at 40–41 is essential for toxin activity; sequence RR. H45 is modified (histidine amide).

In terms of tissue distribution, expressed by the venom gland.

The protein resides in the secreted. In terms of biological role, toxin with unique selectivity to KCa2 channels. Potently blocks human, rat and mouse KCa2.2/KCNN2/SK2 channels (IC(50)=27-140 pM), and moderately blocks human and rat KCa2.3/KCNN3/SK3 channels (IC(50)=0.6-4 nM), and human (IC(50)=0.7-12 nM) and mouse (IC(50)=28 nM) KCa2.1/KCNN1/SK1 channels. Does not show any antimicrobial activity. In vivo, intracerebroventricular injection into rats of a dose of 1 ng results in neurodegeneration specifically in the Purkinje cells of the cerebellum, and induces seizures characterized by hypersensitivity to noise, loss of postural control, paroxystic jerking, and alternating periods of great agitation with tonic-clonic convulsions and periods of total prostration. When administered at high doses, exerts anti-inflammatory, anti-oxidative, anti-fibrotic and anti-apoptotic properties in several models of inflammatory disease, including gouty arthritis, atherosclerosis, atopic dermatitis and acute kidney injury. Down-regulates pro-inflammatory signaling pathways, such as the NF-kappaB and STAT3 pathways, probably by blocking SK channels such as KCa2.2/KCNN2/SK2 and/or KCa2.3/KCNN3/SK3 which are thought to be involved in promoting some inflammatory responses. For example in mouse and rat microglia cells, inhibits LPS-activated KCa2.2/KCNN2/SK2 channels and TLR4 expression leading to the down-regulation of the NF-kappaB, STAT, and MAPK/ERK signaling pathways and, as a consequence, decreases secretion of pro-inflammatory cytokines. This chain is Apamin, found in Apis mellifera (Honeybee).